We begin with the raw amino-acid sequence, 525 residues long: Potassium voltage-gated channel subfamily A member 3 (525 aa).

Residues 1-23 (MTVVPGDHLLEPEAAGGGGGDPP) form a disordered region. Residues 1–184 (MTVVPGDHLL…EYPESSGPAR (184 aa)) lie on the Cytoplasmic side of the membrane. A helical transmembrane segment spans residues 185–203 (GIAIVSVLVILISIVIFCL). Residues 204-244 (ETLPEFRDEKDYPASPSQDVFEAANNSTSGASSGASSFSDP) lie on the Extracellular side of the membrane. N-linked (GlcNAc...) asparagine glycosylation occurs at Asn-229. Residues 245 to 266 (FFVVETLCIIWFSFELLVRFFA) traverse the membrane as a helical segment. Residue Cys-267 is the site of S-palmitoyl cysteine attachment. Residues 267 to 277 (CPSKATFSRNI) are Cytoplasmic-facing. Residues 278–298 (MNLIDIVAIIPYFITLGTELA) traverse the membrane as a helical segment. Residues 299 to 312 (ERQGNGQQAMSLAI) lie on the Extracellular side of the membrane. The helical; Voltage-sensor transmembrane segment at 313 to 331 (LRVIRLVRVFRIFKLSRHS) threads the bilayer. The Cytoplasmic segment spans residues 332–347 (KGLQILGQTLKASMRE). A helical membrane pass occupies residues 348-367 (LGLLIFFLFIGVILFSSAVY). At 368–408 (FAEADDPSSGFNSIPDAFWWAVVTMTTVGYGDMHPVTIGGK) the chain is on the extracellular side. A Selectivity filter motif is present at residues 394–399 (TVGYGD). Residues 409–431 (IVGSLCAIAGVLTIALPVPVIVS) traverse the membrane as a helical segment. Residues 432-525 (NFNYFYHRET…VNIKKIFTDV (94 aa)) are Cytoplasmic-facing. Positions 432 to 525 (NFNYFYHRET…VNIKKIFTDV (94 aa)) are interaction with KCNE4. Residue Tyr-449 is modified to Phosphotyrosine. At Ser-470 the chain carries Phosphoserine; by PKA. The PDZ-binding signature appears at 523 to 525 (TDV).

It belongs to the potassium channel family. A (Shaker) (TC 1.A.1.2) subfamily. Kv1.3/KCNA3 sub-subfamily. In terms of assembly, homotetramer. Forms heterooligomers with KCNE4 which inhibits KCNA3 activity by impairing localization to the cell membrane. The stoichiometry of KCNA3 and KCNE4 in the heterooligomers are 4:1, 4:2, 4:3 or 4:4 respectively. Increasing the number of KCNE4 subunits steadily slows the activation KCNA3 and decreases its abundance at the cell membrane. However, a single subunit of KCNE4 is sufficient for the cooperative enhancement of the inactivating function of the channel. Interacts with SEC24D; this interaction is reduced in the presence of KCNE4. Interacts with DLG1, DLG2 and DLG4 via their PDZ domains. In terms of processing, phosphorylation on Tyr-449 inhibits its channel activity. N-glycosylation promotes the cell surface expression.

Its subcellular location is the cell membrane. It catalyses the reaction K(+)(in) = K(+)(out). Activity is up-regulated by JAK2. Its function is as follows. Mediates the voltage-dependent potassium ion permeability of excitable membranes. Assuming opened or closed conformations in response to the voltage difference across the membrane, the protein forms a potassium-selective channel through which potassium ions may pass in accordance with their electrochemical gradient. This Rattus norvegicus (Rat) protein is Potassium voltage-gated channel subfamily A member 3 (Kcna3).